Reading from the N-terminus, the 250-residue chain is UPF0259 membrane protein PC1_1998 (250 aa).

6 helical membrane-spanning segments follow: residues 20-40 (FISI…LNHA), 90-110 (FAAL…IQLV), 132-152 (LLFL…LLVI), 156-176 (LLAI…SGIF), 192-212 (ATAP…LVVS), and 222-242 (LGVV…IYLF).

This sequence belongs to the UPF0259 family.

Its subcellular location is the cell inner membrane. The chain is UPF0259 membrane protein PC1_1998 from Pectobacterium carotovorum subsp. carotovorum (strain PC1).